The following is a 229-amino-acid chain: Large ribosomal subunit protein uL1 (229 aa).

It belongs to the universal ribosomal protein uL1 family. Part of the 50S ribosomal subunit.

Binds directly to 23S rRNA. The L1 stalk is quite mobile in the ribosome, and is involved in E site tRNA release. Its function is as follows. Protein L1 is also a translational repressor protein, it controls the translation of the L11 operon by binding to its mRNA. The sequence is that of Large ribosomal subunit protein uL1 from Histophilus somni (strain 2336) (Haemophilus somnus).